The primary structure comprises 251 residues: Phosphate import ATP-binding protein PstB (251 aa).

One can recognise an ABC transporter domain in the interval 5 to 246; the sequence is IKIRGVNFFY…PRDKRTEDYI (242 aa). ATP is bound at residue 37–44; sequence GPSGCGKS.

Belongs to the ABC transporter superfamily. Phosphate importer (TC 3.A.1.7) family. As to quaternary structure, the complex is composed of two ATP-binding proteins (PstB), two transmembrane proteins (PstC and PstA) and a solute-binding protein (PstS).

It localises to the cell membrane. It catalyses the reaction phosphate(out) + ATP + H2O = ADP + 2 phosphate(in) + H(+). Part of the ABC transporter complex PstSACB involved in phosphate import. Responsible for energy coupling to the transport system. In Dehalococcoides mccartyi (strain CBDB1), this protein is Phosphate import ATP-binding protein PstB.